The primary structure comprises 326 residues: Beta-ketoacyl-[acyl-carrier-protein] synthase III (326 aa).

Residues Cys-112 and His-251 contribute to the active site. An ACP-binding region spans residues Gln-252–Arg-256. Residue Asn-281 is part of the active site.

It belongs to the thiolase-like superfamily. FabH family. In terms of assembly, homodimer.

It is found in the cytoplasm. It catalyses the reaction malonyl-[ACP] + acetyl-CoA + H(+) = 3-oxobutanoyl-[ACP] + CO2 + CoA. Its pathway is lipid metabolism; fatty acid biosynthesis. Its function is as follows. Catalyzes the condensation reaction of fatty acid synthesis by the addition to an acyl acceptor of two carbons from malonyl-ACP. Catalyzes the first condensation reaction which initiates fatty acid synthesis and may therefore play a role in governing the total rate of fatty acid production. Possesses both acetoacetyl-ACP synthase and acetyl transacylase activities. Its substrate specificity determines the biosynthesis of branched-chain and/or straight-chain of fatty acids. This is Beta-ketoacyl-[acyl-carrier-protein] synthase III from Clostridium botulinum (strain 657 / Type Ba4).